The following is a 453-amino-acid chain: Tubulin delta chain (453 aa).

Position 143–149 (143–149 (AGGTGSG)) interacts with GTP.

Belongs to the tubulin family. Found in a complex with TEDC1, TEDC2, TUBE1 and TUBD1.

It is found in the nucleus. The protein resides in the cytoplasm. It localises to the cytoskeleton. Its subcellular location is the microtubule organizing center. The protein localises to the centrosome. It is found in the centriole. The protein resides in the cell projection. It localises to the cilium. Acts as a positive regulator of hedgehog signaling and regulates ciliary function. The protein is Tubulin delta chain (TUBD1) of Homo sapiens (Human).